The chain runs to 227 residues: 2,3-bisphosphoglycerate-dependent phosphoglycerate mutase (227 aa).

Residues 7–14, 20–21, Arg59, 86–89, Lys97, 113–114, and 182–183 contribute to the substrate site; these read RHGFSEWN, TG, ERHY, RR, and GN. His8 functions as the Tele-phosphohistidine intermediate in the catalytic mechanism. The active-site Proton donor/acceptor is the Glu86.

The protein belongs to the phosphoglycerate mutase family. BPG-dependent PGAM subfamily. In terms of assembly, homodimer.

The catalysed reaction is (2R)-2-phosphoglycerate = (2R)-3-phosphoglycerate. It functions in the pathway carbohydrate degradation; glycolysis; pyruvate from D-glyceraldehyde 3-phosphate: step 3/5. Catalyzes the interconversion of 2-phosphoglycerate and 3-phosphoglycerate. The protein is 2,3-bisphosphoglycerate-dependent phosphoglycerate mutase of Haemophilus influenzae (strain ATCC 51907 / DSM 11121 / KW20 / Rd).